A 222-amino-acid polypeptide reads, in one-letter code: N-(5'-phosphoribosyl)anthranilate isomerase (222 aa).

Belongs to the TrpF family.

The catalysed reaction is N-(5-phospho-beta-D-ribosyl)anthranilate = 1-(2-carboxyphenylamino)-1-deoxy-D-ribulose 5-phosphate. The protein operates within amino-acid biosynthesis; L-tryptophan biosynthesis; L-tryptophan from chorismate: step 3/5. The sequence is that of N-(5'-phosphoribosyl)anthranilate isomerase from Beijerinckia indica subsp. indica (strain ATCC 9039 / DSM 1715 / NCIMB 8712).